The following is a 721-amino-acid chain: Leucine-rich repeat flightless-interacting protein 2 (721 aa).

The tract at residues M1 to E370 is DVL3-binding. Phosphoserine is present on S18. A coiled-coil region spans residues E22 to R49. G96, L101, Y168, S173, S190, and S202 each carry phosphoserine. 2 disordered regions span residues S232–V262 and K295–D338. Composition is skewed to polar residues over residues P237–D251 and T305–D338. Phosphoserine occurs at positions 309, 312, 320, 324, and 328. Position 331 is a phosphothreonine (T331). A phosphoserine mark is found at S332 and S333. 2 coiled-coil regions span residues D349–H524 and L566–R714.

The protein belongs to the LRRFIP family. As to quaternary structure, interacts (via N-terminus) with DVL3. Interacts with FLII. Weakly interacts with MYD88 in resting cells. Following LPS-stimulation, the interaction with MYD88 is rapidly enhanced; the complex gradually dissociates to basal levels after 6 hours of stimulation. Interaction with MYD88 is regulated by LPS-induced phosphorylation at Ser-202. In the presence of LPS, competes with FLII for MYD88-binding. In terms of processing, ser-190 and Ser-202 are phosphorylated in response to LPS stimulation. Ser-202 phosphorylation regulates the LPS-induced interaction with MYD88. Widely expressed, with highest levels in heart and skeletal muscle.

May function as activator of the canonical Wnt signaling pathway, in association with DVL3, upstream of CTNNB1/beta-catenin. Positively regulates Toll-like receptor (TLR) signaling in response to agonist probably by competing with the negative FLII regulator for MYD88-binding. The chain is Leucine-rich repeat flightless-interacting protein 2 (LRRFIP2) from Homo sapiens (Human).